A 71-amino-acid polypeptide reads, in one-letter code: Translation initiation factor IF-1 (71 aa).

The 71-residue stretch at 1–71 (MSKDDLIQFT…LTKGRVIHRH (71 aa)) folds into the S1-like domain.

Belongs to the IF-1 family. In terms of assembly, component of the 30S ribosomal translation pre-initiation complex which assembles on the 30S ribosome in the order IF-2 and IF-3, IF-1 and N-formylmethionyl-tRNA(fMet); mRNA recruitment can occur at any time during PIC assembly.

The protein localises to the cytoplasm. One of the essential components for the initiation of protein synthesis. Stabilizes the binding of IF-2 and IF-3 on the 30S subunit to which N-formylmethionyl-tRNA(fMet) subsequently binds. Helps modulate mRNA selection, yielding the 30S pre-initiation complex (PIC). Upon addition of the 50S ribosomal subunit IF-1, IF-2 and IF-3 are released leaving the mature 70S translation initiation complex. The sequence is that of Translation initiation factor IF-1 from Rickettsia conorii (strain ATCC VR-613 / Malish 7).